The primary structure comprises 121 residues: Large ribosomal subunit protein uL14c (121 aa).

This sequence belongs to the universal ribosomal protein uL14 family. In terms of assembly, part of the 50S ribosomal subunit.

Its subcellular location is the plastid. The protein localises to the chloroplast. Functionally, binds to 23S rRNA. The protein is Large ribosomal subunit protein uL14c of Oedogonium cardiacum (Filamentous green alga).